Consider the following 84-residue polypeptide: uncharacterized protein (84 aa).

Basic residues-rich tracts occupy residues 1–15 (MPPH…HGHH) and 67–84 (HHGH…GHFF). Disordered regions lie at residues 1-22 (MPPH…TYTT) and 64-84 (TSHH…GHFF).

This is an uncharacterized protein from Dictyostelium discoideum (Social amoeba).